Consider the following 67-residue polypeptide: Kappa-conotoxin-like 1 (67 aa).

An N-terminal signal peptide occupies residues 1-26 (MMFRLTSVSCFLLVIACLNLFQVVLT). Cystine bridges form between C29/C43, C36/C48, C42/C51, and C47/C55. The residue at position 59 (I59) is an Isoleucine amide. A propeptide spanning residues 63-67 (ATFQE) is cleaved from the precursor.

This sequence belongs to the conotoxin I2 superfamily. As to expression, expressed by the venom duct.

The protein resides in the secreted. Its function is as follows. Inhibits the vertebrate voltage-gated potassium channels Kv1.1/KCNA1 and Kv1.3/KCNA3. The chain is Kappa-conotoxin-like 1 from Conus vexillum (Flag cone).